Reading from the N-terminus, the 520-residue chain is Putative tyrosine carboxypeptidase MATCAP2 (520 aa).

Residues 116 to 153 (EEKKYHSQKQSSSTYSKRCRKPSKSPNTSRSKDPRRMK) are disordered. His331 serves as a coordination point for Zn(2+). The Nucleophile role is filled by Glu332. His336 and Glu367 together coordinate Zn(2+).

Zn(2+) serves as cofactor.

Putative tyrosine carboxypeptidase. This is Putative tyrosine carboxypeptidase MATCAP2 from Homo sapiens (Human).